The primary structure comprises 36 residues: Cytochrome b6-f complex subunit 7 (36 aa).

At 1–5 (NAAAE) the chain is on the lumenal side. The helical transmembrane segment at 6-28 (IFRIAAVMNGLTLVGVAIGFVLL) threads the bilayer. The Stromal portion of the chain corresponds to 29 to 36 (RIEATVEE).

Belongs to the PetM family. In terms of assembly, the 4 large subunits of the cytochrome b6-f complex are cytochrome b6, subunit IV (17 kDa polypeptide, PetD), cytochrome f and the Rieske protein, while the 4 small subunits are PetG, PetL, PetM and PetN. The complex functions as a dimer.

Its subcellular location is the plastid. It is found in the chloroplast thylakoid membrane. Functionally, component of the cytochrome b6-f complex, which mediates electron transfer between photosystem II (PSII) and photosystem I (PSI), cyclic electron flow around PSI, and state transitions. The polypeptide is Cytochrome b6-f complex subunit 7 (Spinacia oleracea (Spinach)).